A 51-amino-acid chain; its full sequence is Insulin (51 aa).

Intrachain disulfides connect Cys-7-Cys-37, Cys-19-Cys-50, and Cys-36-Cys-41.

This sequence belongs to the insulin family. As to quaternary structure, heterodimer of a B chain and an A chain linked by two disulfide bonds.

The protein resides in the secreted. Insulin decreases blood glucose concentration. It increases cell permeability to monosaccharides, amino acids and fatty acids. It accelerates glycolysis, the pentose phosphate cycle, and glycogen synthesis in liver. The polypeptide is Insulin (INS) (Hystrix cristata (North African crested porcupine)).